The sequence spans 334 residues: Ventral anterior homeobox 1 (334 aa).

Residues 1–34 (MFGKPDKMDVRCHSDAEAARVSKNAHKESRESKG) are compositionally biased toward basic and acidic residues. The tract at residues 1-41 (MFGKPDKMDVRCHSDAEAARVSKNAHKESRESKGAEGNLPA) is disordered. A DNA-binding region (homeobox) is located at residues 100–159 (PKRTRTSFTAEQLYRLEMEFQRCQYVVGRERTELARQLNLSETQVKVWFQNRRTKQKKDQ). Disordered stretches follow at residues 234-263 (PGPA…GLHA) and 314-334 (SAFE…KALD). The span at 323–334 (NNKEGAEKKALD) shows a compositional bias: basic and acidic residues.

Belongs to the EMX homeobox family.

Its subcellular location is the nucleus. Transcription factor that may function in dorsoventral specification of the forebrain. Required for axon guidance and major tract formation in the developing forebrain. May contribute to the differentiation of the neuroretina, pigmented epithelium and optic stalk. The chain is Ventral anterior homeobox 1 (VAX1) from Homo sapiens (Human).